We begin with the raw amino-acid sequence, 397 residues long: Elongation factor Tu (397 aa).

The tr-type G domain occupies K10 to E206. A G1 region spans residues G19–T26. G19–T26 serves as a coordination point for GTP. T26 is a Mg(2+) binding site. The tract at residues G62–S66 is G2. A G3 region spans residues D83–G86. GTP is bound by residues D83 to H87 and N138 to D141. A G4 region spans residues N138–D141. Residues S176–L178 form a G5 region.

The protein belongs to the TRAFAC class translation factor GTPase superfamily. Classic translation factor GTPase family. EF-Tu/EF-1A subfamily. In terms of assembly, monomer.

It is found in the cytoplasm. The enzyme catalyses GTP + H2O = GDP + phosphate + H(+). GTP hydrolase that promotes the GTP-dependent binding of aminoacyl-tRNA to the A-site of ribosomes during protein biosynthesis. In Kineococcus radiotolerans (strain ATCC BAA-149 / DSM 14245 / SRS30216), this protein is Elongation factor Tu.